The sequence spans 366 residues: Histidinol-phosphate aminotransferase (366 aa).

Residue Lys228 is modified to N6-(pyridoxal phosphate)lysine.

The protein belongs to the class-II pyridoxal-phosphate-dependent aminotransferase family. Histidinol-phosphate aminotransferase subfamily. As to quaternary structure, homodimer. Pyridoxal 5'-phosphate serves as cofactor.

The enzyme catalyses L-histidinol phosphate + 2-oxoglutarate = 3-(imidazol-4-yl)-2-oxopropyl phosphate + L-glutamate. Its pathway is amino-acid biosynthesis; L-histidine biosynthesis; L-histidine from 5-phospho-alpha-D-ribose 1-diphosphate: step 7/9. The sequence is that of Histidinol-phosphate aminotransferase from Corynebacterium glutamicum (strain R).